Reading from the N-terminus, the 398-residue chain is MSKTTEIIRLTEQYGANNYHPLPVVLTKGEGVWVEDPEGNRYMDMLSAYSAVNQGHRHPKIIQALKEQADRITLTSRAFHNDQLGPWYEKVAKLTGKDMVLPMNTGAEAVETAFKAARRWAYDVKGVEKDKAEIIVCENNFHGRTMAAVSMSSSEEYKRGFGPMLPGIKIIPYGDVEALKKAITPNTAAFIFEPIQGEAGINIPPEGFLKEAYNVCKENNVLYIADEIQSGLGRSGKMFACDWENVVPDMYILGKALGGGVFPISCVAANRDILGVFNPGSHGSTFGGNPLACAVSIAALDVIIEEKLPERSLELGNYFIEKLREIQHPDIKEVRGRGLFIGVELHTSARPYCEKLKQEGLLCKETHDTVIRFAPPLVITKEELDWAIERVKKVFAGV.

Lys255 carries the N6-(pyridoxal phosphate)lysine modification.

It belongs to the class-III pyridoxal-phosphate-dependent aminotransferase family. OAT subfamily. The cofactor is pyridoxal 5'-phosphate.

Its subcellular location is the cytoplasm. The catalysed reaction is a 2-oxocarboxylate + L-ornithine = L-glutamate 5-semialdehyde + an L-alpha-amino acid. Its pathway is amino-acid biosynthesis; L-proline biosynthesis; L-glutamate 5-semialdehyde from L-ornithine: step 1/1. Its function is as follows. Catalyzes the interconversion of ornithine to glutamate semialdehyde. The chain is Ornithine aminotransferase from Geobacillus sp. (strain WCH70).